A 380-amino-acid polypeptide reads, in one-letter code: Fibromodulin (380 aa).

The first 18 residues, 1 to 18 (MRWANILLVAGLCRASLG), serve as a signal peptide directing secretion. The region spanning 71-109 (EAQQASSWQCPQECDCPPNFSSAMYCDTRNLRYLPFVPT) is the LRRNT domain. N89 carries an N-linked (GlcNAc...) asparagine glycan. LRR repeat units follow at residues 110–131 (RMKY…AFDN), 134–147 (ELEW…QISS), 160–180 (NLER…PLPR), 181–202 (SLRE…ALEG), 205–227 (NLTA…KGLK), 228–248 (SLIL…GLPM), 249–270 (ALEQ…YFKV), and 273–293 (KLLY…STNT). The N-linked (GlcNAc...) (keratan sulfate) asparagine glycan is linked to N131. N-linked (GlcNAc...) (keratan sulfate) asparagine glycosylation is present at N170. The N-linked (GlcNAc...) (keratan sulfate) asparagine glycan is linked to N205. N-linked (GlcNAc...) (keratan sulfate) asparagine glycosylation occurs at N295. LRR repeat units lie at residues 298 to 317 (SILE…RVST) and 318 to 339 (NLEN…SFCT). An intrachain disulfide couples C338 to C371. Residue N345 is glycosylated (N-linked (GlcNAc...) asparagine). The stretch at 348 to 371 (RLQVLRLDGNEIKRNAMPPDAPLC) is one LRR 11 repeat.

The protein belongs to the small leucine-rich proteoglycan (SLRP) family. SLRP class II subfamily. In terms of assembly, binds to type I and type II collagen. In terms of processing, binds keratan sulfate chains.

It localises to the secreted. It is found in the extracellular space. The protein localises to the extracellular matrix. Affects the rate of fibrils formation. May have a primary role in collagen fibrillogenesis. The polypeptide is Fibromodulin (FMOD) (Gallus gallus (Chicken)).